Reading from the N-terminus, the 282-residue chain is NADPH-dependent 7-cyano-7-deazaguanine reductase (282 aa).

88–90 provides a ligand contact to substrate; the sequence is IES. 90–91 contributes to the NADPH binding site; that stretch reads SK. C190 serves as the catalytic Thioimide intermediate. The active-site Proton donor is D197. 229 to 230 is a substrate binding site; it reads HE. 258–259 lines the NADPH pocket; that stretch reads RG.

It belongs to the GTP cyclohydrolase I family. QueF type 2 subfamily. As to quaternary structure, homodimer.

Its subcellular location is the cytoplasm. It catalyses the reaction 7-aminomethyl-7-carbaguanine + 2 NADP(+) = 7-cyano-7-deazaguanine + 2 NADPH + 3 H(+). The protein operates within tRNA modification; tRNA-queuosine biosynthesis. Functionally, catalyzes the NADPH-dependent reduction of 7-cyano-7-deazaguanine (preQ0) to 7-aminomethyl-7-deazaguanine (preQ1). This is NADPH-dependent 7-cyano-7-deazaguanine reductase from Escherichia coli O157:H7.